The following is a 406-amino-acid chain: Peptidyl-alpha-hydroxyglycine alpha-amidating lyase 2 (406 aa).

The first 19 residues, 1–19 (MSRLLFVALLAISLGYVAS), serve as a signal peptide directing secretion. 4 NHL repeats span residues 168–209 (GAIK…FKPF), 218–261 (GKRF…FNAA), 264–308 (LLRT…PKAG), and 358–402 (DPRS…RVWK). 2 disulfide bridges follow: C231-C251 and C293-C304.

The protein belongs to the peptidyl-alpha-hydroxyglycine alpha-amidating lyase family. Zn(2+) serves as cofactor. Post-translationally, N-glycosylated. In terms of tissue distribution, only found in a subset of neurons distributed throughout all levels of the central nervous system (CNS). Present in at least some neuroendocrine cells. In adult brains, it is only present in a small handful of cells, the majority of which being distributed in distal parts of the medulla, with a higher expression in the posterior surface of the brain (at protein level).

The protein resides in the secreted. It catalyses the reaction a [peptide]-C-terminal (2S)-2-hydroxyglycine = a [peptide]-C-terminal amide + glyoxylate. Peptidyl-alpha-hydroxylglycine alpha-amidating lyase that catalyzes an essential reaction in C-terminal alpha-amidation of peptides. Mediates the dismutation of the unstable peptidyl(2-hydroxyglycine) intermediate to glyoxylate and the corresponding desglycine peptide amide. C-terminal amidation of peptides such as neuropeptides is essential for full biological activity. This chain is Peptidyl-alpha-hydroxyglycine alpha-amidating lyase 2 (Pal2), found in Drosophila melanogaster (Fruit fly).